The chain runs to 447 residues: ATP synthase subunit beta (447 aa).

ATP is bound at residue 147 to 154 (GGAGVGKT).

This sequence belongs to the ATPase alpha/beta chains family. As to quaternary structure, F-type ATPases have 2 components, CF(1) - the catalytic core - and CF(0) - the membrane proton channel. CF(1) has five subunits: alpha(3), beta(3), gamma(1), delta(1), epsilon(1). CF(0) has three main subunits: a(1), b(2) and c(9-12). The alpha and beta chains form an alternating ring which encloses part of the gamma chain. CF(1) is attached to CF(0) by a central stalk formed by the gamma and epsilon chains, while a peripheral stalk is formed by the delta and b chains.

Its subcellular location is the cell membrane. It catalyses the reaction ATP + H2O + 4 H(+)(in) = ADP + phosphate + 5 H(+)(out). In terms of biological role, produces ATP from ADP in the presence of a proton gradient across the membrane. The catalytic sites are hosted primarily by the beta subunits. The chain is ATP synthase subunit beta from Carsonella ruddii (strain PV).